Consider the following 510-residue polypeptide: Cytochrome c-552 (510 aa).

An N-terminal signal peptide occupies residues 1–50 (MVVFLFILYRQSDLKFKSMNGVIIVNTLKKRLFVATTMIWGLSVTLPVLA). H124 lines the heme c pocket. C152, C155, and K156 together coordinate heme. Residues C190, C193, H194, C239, C242, and H243 each contribute to the heme c site. The Ca(2+) site is built by E245, Y246, K291, and Q293. Y246 lines the substrate pocket. Substrate is bound at residue H294. Residues H305, C312, C315, H316, H331, C344, C347, H348, and H423 each coordinate heme c.

The protein belongs to the cytochrome c-552 family. It depends on Ca(2+) as a cofactor. Heme c is required as a cofactor.

The protein localises to the periplasm. It carries out the reaction 6 Fe(III)-[cytochrome c] + NH4(+) + 2 H2O = 6 Fe(II)-[cytochrome c] + nitrite + 8 H(+). It functions in the pathway nitrogen metabolism; nitrate reduction (assimilation). In terms of biological role, catalyzes the reduction of nitrite to ammonia, consuming six electrons in the process. The protein is Cytochrome c-552 of Pasteurella multocida (strain Pm70).